Consider the following 59-residue polypeptide: Photosystem II reaction center protein K (59 aa).

Residues 1-22 (MILYSHLSTLIDIDLSNNIFLA) constitute a propeptide that is removed on maturation. Residues 30-50 (IFDPLVDVMPVIPVFFLLLAF) traverse the membrane as a helical segment.

The protein belongs to the PsbK family. PSII is composed of 1 copy each of membrane proteins PsbA, PsbB, PsbC, PsbD, PsbE, PsbF, PsbH, PsbI, PsbJ, PsbK, PsbL, PsbM, PsbT, PsbX, PsbY, PsbZ, Psb30/Ycf12, at least 3 peripheral proteins of the oxygen-evolving complex and a large number of cofactors. It forms dimeric complexes.

It is found in the plastid. It localises to the chloroplast thylakoid membrane. Functionally, one of the components of the core complex of photosystem II (PSII). PSII is a light-driven water:plastoquinone oxidoreductase that uses light energy to abstract electrons from H(2)O, generating O(2) and a proton gradient subsequently used for ATP formation. It consists of a core antenna complex that captures photons, and an electron transfer chain that converts photonic excitation into a charge separation. The protein is Photosystem II reaction center protein K of Chara vulgaris (Common stonewort).